A 335-amino-acid polypeptide reads, in one-letter code: Fructose-1,6-bisphosphatase class 1 (335 aa).

Mg(2+)-binding residues include Glu-92, Asp-114, Leu-116, and Asp-117. Substrate is bound by residues 117–120, Asn-209, and Lys-275; that span reads DGSS. Residue Glu-281 participates in Mg(2+) binding.

Belongs to the FBPase class 1 family. In terms of assembly, homotetramer. Mg(2+) is required as a cofactor.

The protein resides in the cytoplasm. It catalyses the reaction beta-D-fructose 1,6-bisphosphate + H2O = beta-D-fructose 6-phosphate + phosphate. Its pathway is carbohydrate biosynthesis; gluconeogenesis. This chain is Fructose-1,6-bisphosphatase class 1, found in Polaromonas sp. (strain JS666 / ATCC BAA-500).